A 336-amino-acid chain; its full sequence is Phosphonate dehydrogenase (336 aa).

NAD(+)-binding positions include 155–156, Glu-175, 235–237, and Asp-261; these read AI and PCR. The active site involves Arg-237. Glu-266 is an active-site residue. His-292 functions as the Proton donor in the catalytic mechanism. 292-295 is a binding site for NAD(+); that stretch reads HIGS.

Homodimer.

The catalysed reaction is phosphonate + NAD(+) + H2O = phosphate + NADH + H(+). Inhibited by NaCl, NADH and sulfite. In terms of biological role, catalyzes phosphite (phosphonate) oxidation. This is Phosphonate dehydrogenase (ptxD) from Stutzerimonas stutzeri (Pseudomonas stutzeri).